Reading from the N-terminus, the 353-residue chain is Uroporphyrinogen decarboxylase (353 aa).

Residues 33-37 (RQAGR), Asp-82, Tyr-158, Ser-213, and His-332 each bind substrate.

Belongs to the uroporphyrinogen decarboxylase family. Homodimer.

The protein localises to the cytoplasm. It catalyses the reaction uroporphyrinogen III + 4 H(+) = coproporphyrinogen III + 4 CO2. It participates in porphyrin-containing compound metabolism; protoporphyrin-IX biosynthesis; coproporphyrinogen-III from 5-aminolevulinate: step 4/4. Catalyzes the decarboxylation of four acetate groups of uroporphyrinogen-III to yield coproporphyrinogen-III. The chain is Uroporphyrinogen decarboxylase from Gluconobacter oxydans (strain 621H) (Gluconobacter suboxydans).